The following is a 156-amino-acid chain: Small ribosomal subunit protein uS7 (156 aa).

Belongs to the universal ribosomal protein uS7 family. As to quaternary structure, part of the 30S ribosomal subunit. Contacts proteins S9 and S11.

Its function is as follows. One of the primary rRNA binding proteins, it binds directly to 16S rRNA where it nucleates assembly of the head domain of the 30S subunit. Is located at the subunit interface close to the decoding center, probably blocks exit of the E-site tRNA. This chain is Small ribosomal subunit protein uS7, found in Prochlorococcus marinus (strain MIT 9303).